A 201-amino-acid polypeptide reads, in one-letter code: L(+)-tartrate dehydratase subunit beta (201 aa).

Histidine 37 is a catalytic residue.

The protein belongs to the class-I fumarase family. In terms of assembly, heterotetramer of two alpha and two beta subunits.

It carries out the reaction (2R,3R)-tartrate = oxaloacetate + H2O. The sequence is that of L(+)-tartrate dehydratase subunit beta (ttdB) from Shigella sonnei (strain Ss046).